The chain runs to 360 residues: Peptide chain release factor 1 (360 aa).

The residue at position 235 (Gln235) is an N5-methylglutamine. The segment covering 285–308 (KRQEAEASERRNLLGSGDRSDRNR) has biased composition (basic and acidic residues). A disordered region spans residues 285–313 (KRQEAEASERRNLLGSGDRSDRNRTYNFP).

This sequence belongs to the prokaryotic/mitochondrial release factor family. Methylated by PrmC. Methylation increases the termination efficiency of RF1.

The protein localises to the cytoplasm. Functionally, peptide chain release factor 1 directs the termination of translation in response to the peptide chain termination codons UAG and UAA. In Photorhabdus laumondii subsp. laumondii (strain DSM 15139 / CIP 105565 / TT01) (Photorhabdus luminescens subsp. laumondii), this protein is Peptide chain release factor 1.